The chain runs to 400 residues: Argininosuccinate synthase (400 aa).

8–16 is an ATP binding site; that stretch reads AYSGGLDTS. 2 residues coordinate L-citrulline: Y87 and S92. G117 lines the ATP pocket. 3 residues coordinate L-aspartate: T119, N123, and D124. N123 lines the L-citrulline pocket. L-citrulline-binding residues include R127, S175, E259, and Y271.

The protein belongs to the argininosuccinate synthase family. Type 1 subfamily. In terms of assembly, homotetramer.

It localises to the cytoplasm. It catalyses the reaction L-citrulline + L-aspartate + ATP = 2-(N(omega)-L-arginino)succinate + AMP + diphosphate + H(+). It participates in amino-acid biosynthesis; L-arginine biosynthesis; L-arginine from L-ornithine and carbamoyl phosphate: step 2/3. This chain is Argininosuccinate synthase, found in Frankia alni (strain DSM 45986 / CECT 9034 / ACN14a).